A 529-amino-acid polypeptide reads, in one-letter code: DNA-binding protein (529 aa).

Positions 1–17 are enriched in basic and acidic residues; that stretch reads MASREEEQRETTPERGR. Disordered regions lie at residues 1–108 and 125–168; these read MASR…VDSE and PVLI…SEST. Positions 129–139 are enriched in basic residues; it reads KHGKGGKRTVR. Residues 140-155 show a composition bias toward basic and acidic residues; the sequence is RLNEDDPVARGMRTQE. Positions 156-165 are enriched in acidic residues; it reads EKEESSEAES. Position 195 is a phosphotyrosine; by host (Y195). Residues C284 and H286 each coordinate Zn(2+). The flexible loop stretch occupies residues 297–331; the sequence is IEMDVTSENGQRALKEQSSKAKIVKNRWGRNVVQI. The Zn(2+) site is built by C339, C355, C396, C398, C450, and C467. Positions 513 to 529 are C-terminal arm, DBP binding; that stretch reads VSLPVAHSDARQNPFDF.

This sequence belongs to the adenoviridae E2A DNA-binding protein family. In terms of assembly, homomultimerizes on viral ssDNA bound to pTP. Forms an initiation complex with viral polymerase, pTP and hosts NFIA and POU2F1/OCT1. Interacts with host SRCAP.

It localises to the host nucleus. Functionally, plays a role in the elongation phase of viral strand displacement replication by unwinding the template in an ATP-independent fashion, employing its capacity to form multimers. Also enhances the rate of initiation. Released from template upon second strand synthesis. Assembles in complex with viral pTP, viral pol, host NFIA and host POU2F1/OCT1 on viral origin of replication. Covers the whole ssDNA genome during synthesis. The complementary strand synthesis induces its release from DNA template. May inhibit cellular transcription mediated by the interaction between host SRCAP and CBP. This is DNA-binding protein from Human adenovirus C serotype 2 (HAdV-2).